The chain runs to 135 residues: Histone H2A (135 aa).

The tract at residues 1 to 24 (MTGGGKSGGKASSGKNAQSRSSKA) is disordered. N6-acetyllysine is present on residues lysine 6 and lysine 10. Glutamine 107 carries the post-translational modification N5-methylglutamine. Position 132 is a phosphoserine (serine 132). Positions 132 to 133 (SQ) match the [ST]-Q motif motif.

This sequence belongs to the histone H2A family. As to quaternary structure, the nucleosome is a histone octamer containing two molecules each of H2A, H2B, H3 and H4 assembled in one H3-H4 heterotetramer and two H2A-H2B heterodimers. The octamer wraps approximately 147 bp of DNA. Phosphorylated to form H2AS128ph (gamma-H2A) in response to DNA double-strand breaks (DSBs) generated by exogenous genotoxic agents and by stalled replication forks. Phosphorylation is dependent on the DNA damage checkpoint kinases MEC1/ATR and TEL1/ATM, spreads on either side of a detected DSB site and may mark the surrounding chromatin for recruitment of proteins required for DNA damage signaling and repair. Gamma-H2A is removed from the DNA prior to the strand invasion-primer extension step of the repair process and subsequently dephosphorylated. Dephosphorylation is necessary for efficient recovery from the DNA damage checkpoint. Post-translationally, acetylated by ESA1 to form H2AK4ac and H2AK7ac.

Its subcellular location is the nucleus. The protein resides in the chromosome. Core component of nucleosome which plays a central role in DNA double strand break (DSB) repair. Nucleosomes wrap and compact DNA into chromatin, limiting DNA accessibility to the cellular machineries which require DNA as a template. Histones thereby play a central role in transcription regulation, DNA repair, DNA replication and chromosomal stability. DNA accessibility is regulated via a complex set of post-translational modifications of histones, also called histone code, and nucleosome remodeling. This chain is Histone H2A (HTA1), found in Podospora anserina (Pleurage anserina).